A 396-amino-acid chain; its full sequence is MDDYKRILITKILKNEVTEALGCTEVGLIGYAVSLCNISDPFSIEKIELTLNNGSFKNAYAVGVPNTKKYGILPAVVGGLLGDHKNKLLVFNGIKYSQKLEDFIKERLKIRVINSPLYCGVKIKDNSGNTFESLIKDNHLNVVIPKINNKLISEINGSEKEEYKNLELLDFLEYIDEIPEEIIQLVEKTIYTNNNLIKGDFLNFGNDCLSNMVNKTTSACNTRMIGENMPAMSVAKSGNMGIMATLPIIAYDYSNEQNQEKLIKSILLSVLVTIYATYKSSYLSSMCGCVSKGGMGAVIGLCYYKNGKNIKKLDSAARTFTANLPGIICDGGKVGCALKLASGCFAAYSSLFVDISYENGIVGKNFKECVENISEISKIMGDLDSDIVKIMSKKEI.

Cys-23 serves as the catalytic Proton acceptor. 3 residues coordinate [4Fe-4S] cluster: Cys-287, Cys-329, and Cys-336.

The protein belongs to the L-cysteine desulfidase family. Homotrimer. It depends on [4Fe-4S] cluster as a cofactor.

It catalyses the reaction L-cysteine + H2O = hydrogen sulfide + pyruvate + NH4(+) + H(+). Its function is as follows. Catalyzes the cleavage of L-cysteine to form 2-aminoprop-2-enoate and sulfide. The former then spontaneously hydrolyzes to pyruvate and NH(3). May be responsible for the production of sulfide required for the biosynthesis of iron-sulfur centers in this archaea. This is L-cysteine desulfidase from Methanococcus maripaludis (strain DSM 14266 / JCM 13030 / NBRC 101832 / S2 / LL).